The following is a 385-amino-acid chain: Trans-enoyl reductase poxH (385 aa).

Residue 64–67 coordinates NADP(+); the sequence is QPYS. 156-163 is a substrate binding site; that stretch reads PDPAAPPI. Residues 199–202, 223–226, tyrosine 241, and 289–290 each bind NADP(+); these read STSV, SGTD, and LG. 309 to 313 lines the substrate pocket; sequence HMAPL. 372–373 is an NADP(+) binding site; it reads KR.

It belongs to the zinc-containing alcohol dehydrogenase family. Monomer.

The protein operates within secondary metabolite biosynthesis. Its function is as follows. Trans-enoyl reductase; part of the gene cluster that mediates the biosynthesis of oxaleimides, cytotoxic compounds containing an unusual disubstituted succinimide moiety. The first step of the pathway is provided by the HR-PKS poxF that serves in a new mode of collaborative biosynthesis with the PKS-NRPS poxE, by providing the olefin containing amino acid substrate via the synthesis of an ACP-bound dec-4-enoate. The cytochrome P450 monooxygenase poxM-catalyzed oxidation at the alpha-position creates the enzyme-bound 2-hydroxydec-4-enoyl-ACP thioester, which may be prone to spontaneous hydrolysis to yield 2-hydroxydec-4-enoic acid due to increased electrophilicity of the carbonyl. 2-hydroxydec-4-enoic acid can then be further oxidized by poxM to yield the alpha-ketoacid 2-oxodec-4-enoicacid, which is reductively aminated by the aminotransferase poxL to yield (S,E)-2-aminodec-4-enoic acid. The Hybrid PKS-NRPS synthetase poxE then performs condensation between the octaketide product of its PKS modules and the amino group of (S,E)-2-aminodec-4-enoic acid which is activated and incorporated by the adenylation domain. The resulting aminoacyl product can be cyclized by the Diels-Alderase PoxQ and reductively released by the reductive (R) domain of poxE to yield an aldehyde intermediate. The released aldehyde is then substrate for a Knoevenagel condensation by the hydrolyase poxO followed by an oxidation at the 5-position of the pyrrolidone ring. The presence of the olefin from the amino acid building block allows for migration of the substituted allyl group to occur. This allylic transposition reaction takes place in a conjugate addition, semipinacol-like fashion to yield a succinimide intermediate. Iterative two-electron oxidations of the C7 methyl of the succinimide intermediate to the carboxylic acid can be catalyzed by one of two remaining cytochrome P450 monooxygenasess poxC or poxD to yield oxaleimide A. Subsequent oxidation yields the maleimide scaffold oxaleimide I. Both oxaleimide A and oxaleimide I can undergo oxidative modifications in the decalin ring to yield the series of products oxaleimides B to H. The chain is Trans-enoyl reductase poxH from Penicillium oxalicum (strain 114-2 / CGMCC 5302) (Penicillium decumbens).